Consider the following 203-residue polypeptide: ATP-dependent Clp protease proteolytic subunit 2 (203 aa).

Catalysis depends on Ser-100, which acts as the Nucleophile. His-125 is a catalytic residue.

Belongs to the peptidase S14 family. Fourteen ClpP subunits assemble into 2 heptameric rings which stack back to back to give a disk-like structure with a central cavity, resembling the structure of eukaryotic proteasomes.

Its subcellular location is the cytoplasm. It carries out the reaction Hydrolysis of proteins to small peptides in the presence of ATP and magnesium. alpha-casein is the usual test substrate. In the absence of ATP, only oligopeptides shorter than five residues are hydrolyzed (such as succinyl-Leu-Tyr-|-NHMec, and Leu-Tyr-Leu-|-Tyr-Trp, in which cleavage of the -Tyr-|-Leu- and -Tyr-|-Trp bonds also occurs).. Cleaves peptides in various proteins in a process that requires ATP hydrolysis. Has a chymotrypsin-like activity. Plays a major role in the degradation of misfolded proteins. The polypeptide is ATP-dependent Clp protease proteolytic subunit 2 (Thermobifida fusca (strain YX)).